The chain runs to 275 residues: MQNITDSWFVQGMIKATSDAWLKGWDERNGGNLTLRLDEADIAPFATNFHEKPRYIALSQPMPLLANTPFIVTGSGKFFRNVQLDPAANLGVVKIDSDGAGYHILWGLTHDAVPTSELPAHFLSHCERIKATHGKDRVIMHCHATNLIALTYVLENNTALITRKLWEGSTECLVVFPDGVGILPWMVPGTDEIGQATAQEMQKHSLVLWPFHGVFGSGPTLDETFGLIDTAEKSAEVLVKIYSMGGMKQTITREELVALGKRFGVTPLASAVALY.

The active site involves Glu-117. 3 residues coordinate Zn(2+): His-141, His-143, and His-212.

It belongs to the aldolase class II family. RhaD subfamily. In terms of assembly, homotetramer. Zn(2+) is required as a cofactor.

It is found in the cytoplasm. The enzyme catalyses L-rhamnulose 1-phosphate = (S)-lactaldehyde + dihydroxyacetone phosphate. It participates in carbohydrate degradation; L-rhamnose degradation; glycerone phosphate from L-rhamnose: step 3/3. In terms of biological role, catalyzes the reversible cleavage of L-rhamnulose-1-phosphate to dihydroxyacetone phosphate (DHAP) and L-lactaldehyde. The protein is Rhamnulose-1-phosphate aldolase of Salmonella dublin (strain CT_02021853).